Consider the following 589-residue polypeptide: ATP-dependent lipid A-core flippase (589 aa).

A run of 5 helical transmembrane segments spans residues 29 to 49 (WLLVVAACGALLEAVAGSTFL), 68 to 88 (ALWLPLGIVGLFLLRGIAGYI), 157 to 177 (VIGALVVMLWYSWTVTLAILL), 254 to 274 (ISSAAVQLLGAVGLAMLLLIA), and 283 to 303 (LSPGDFVSLMTSMIAVIPALK). The region spanning 32–314 (VVAACGALLE…LTNVQNMLQS (283 aa)) is the ABC transmembrane type-1 domain. The region spanning 346 to 582 (IEFRGITARY…DGLYAYLYSM (237 aa)) is the ABC transporter domain. 380-387 (GRSGSGKS) serves as a coordination point for ATP.

This sequence belongs to the ABC transporter superfamily. Lipid exporter (TC 3.A.1.106) family. In terms of assembly, homodimer.

The protein localises to the cell inner membrane. The enzyme catalyses ATP + H2O + lipid A-core oligosaccharideSide 1 = ADP + phosphate + lipid A-core oligosaccharideSide 2.. Involved in lipopolysaccharide (LPS) biosynthesis. Translocates lipid A-core from the inner to the outer leaflet of the inner membrane. Transmembrane domains (TMD) form a pore in the inner membrane and the ATP-binding domain (NBD) is responsible for energy generation. The protein is ATP-dependent lipid A-core flippase of Xylella fastidiosa (strain Temecula1 / ATCC 700964).